The sequence spans 423 residues: Serine--tRNA ligase (423 aa).

230 to 232 (TAE) is a binding site for L-serine. 261-263 (RSE) provides a ligand contact to ATP. Glu-284 serves as a coordination point for L-serine. 348 to 351 (EISS) provides a ligand contact to ATP. Ser-384 serves as a coordination point for L-serine.

Belongs to the class-II aminoacyl-tRNA synthetase family. Type-1 seryl-tRNA synthetase subfamily. In terms of assembly, homodimer. The tRNA molecule binds across the dimer.

Its subcellular location is the cytoplasm. It catalyses the reaction tRNA(Ser) + L-serine + ATP = L-seryl-tRNA(Ser) + AMP + diphosphate + H(+). The catalysed reaction is tRNA(Sec) + L-serine + ATP = L-seryl-tRNA(Sec) + AMP + diphosphate + H(+). Its pathway is aminoacyl-tRNA biosynthesis; selenocysteinyl-tRNA(Sec) biosynthesis; L-seryl-tRNA(Sec) from L-serine and tRNA(Sec): step 1/1. Catalyzes the attachment of serine to tRNA(Ser). Is also able to aminoacylate tRNA(Sec) with serine, to form the misacylated tRNA L-seryl-tRNA(Sec), which will be further converted into selenocysteinyl-tRNA(Sec). The protein is Serine--tRNA ligase of Syntrophobacter fumaroxidans (strain DSM 10017 / MPOB).